The primary structure comprises 427 residues: Adenylosuccinate synthetase (427 aa).

Residues 12 to 18 and 40 to 42 contribute to the GTP site; these read GDEGKGK and GHT. The Proton acceptor role is filled by aspartate 13. Mg(2+) contacts are provided by aspartate 13 and glycine 40. IMP contacts are provided by residues 13–16, 38–41, threonine 128, arginine 142, glutamine 223, threonine 238, and arginine 302; these read DEGK and NAGH. Catalysis depends on histidine 41, which acts as the Proton donor. Position 298-304 (298-304) interacts with substrate; it reads VTTGRDR. GTP-binding positions include arginine 304, 330–332, and 412–414; these read KLD and GVG.

It belongs to the adenylosuccinate synthetase family. As to quaternary structure, homodimer. Mg(2+) serves as cofactor.

It is found in the cytoplasm. It carries out the reaction IMP + L-aspartate + GTP = N(6)-(1,2-dicarboxyethyl)-AMP + GDP + phosphate + 2 H(+). Its pathway is purine metabolism; AMP biosynthesis via de novo pathway; AMP from IMP: step 1/2. Functionally, plays an important role in the de novo pathway of purine nucleotide biosynthesis. Catalyzes the first committed step in the biosynthesis of AMP from IMP. This chain is Adenylosuccinate synthetase, found in Streptomyces griseus subsp. griseus (strain JCM 4626 / CBS 651.72 / NBRC 13350 / KCC S-0626 / ISP 5235).